The chain runs to 88 residues: Cell division topological specificity factor (88 aa).

It belongs to the MinE family.

Prevents the cell division inhibition by proteins MinC and MinD at internal division sites while permitting inhibition at polar sites. This ensures cell division at the proper site by restricting the formation of a division septum at the midpoint of the long axis of the cell. The sequence is that of Cell division topological specificity factor from Clostridium kluyveri (strain ATCC 8527 / DSM 555 / NBRC 12016 / NCIMB 10680 / K1).